Reading from the N-terminus, the 1014-residue chain is Probable sucrose-phosphate synthase 5 (1014 aa).

2 stretches are compositionally biased toward basic and acidic residues: residues 29-41 (RRLEQELGSREAA) and 49-58 (EGEKDGKPDT). 2 disordered regions span residues 29–108 (RRLE…SDEE) and 648–677 (QLLRVPPSPSSSSAAAAAAGGGGAAASSEP).

This sequence belongs to the glycosyltransferase 1 family. Homodimer or homotetramer. As to expression, expressed in germinating seeds.

It carries out the reaction beta-D-fructose 6-phosphate + UDP-alpha-D-glucose = sucrose 6(F)-phosphate + UDP + H(+). It functions in the pathway glycan biosynthesis; sucrose biosynthesis; sucrose from D-fructose 6-phosphate and UDP-alpha-D-glucose: step 1/2. Its activity is regulated as follows. Activity is regulated by phosphorylation and moderated by concentration of metabolites and light. Its function is as follows. Plays a role in photosynthetic sucrose synthesis by catalyzing the rate-limiting step of sucrose biosynthesis from UDP-glucose and fructose- 6-phosphate. Involved in the regulation of carbon partitioning in the leaves of plants. May regulate the synthesis of sucrose and therefore play a major role as a limiting factor in the export of photoassimilates out of the leaf. Plays a role for sucrose availability that is essential for plant growth and fiber elongation. This chain is Probable sucrose-phosphate synthase 5 (SPS5), found in Oryza sativa subsp. japonica (Rice).